A 544-amino-acid chain; its full sequence is MAAKDVQFGNEVRQKMVNGVNILANAVRVTLGPKGRNVVVDRAFGGPHITKDGVTVAKEIELKDKFENMGAQMVKEVASKTNDVAGDGTTTATVLAQSIVAEGIKAVTAGMNPTDLKRGIDKAVAALVEELKNIAKPCDTSKEIAQVGSISANSDEQVGAIIAEAMEKVGKEGVITVEDGKSLENELDVVEGMQFDRGYLSPYFINDAEKQIAGLDNPFVLLFDKKISNIRDLLPVLEQVAKASRPLLIIAEDVEGEALATLVVNNIRGVLKTVAVKAPGFGDRRKAMLQDIAILTGAVVISEEVGLSLEKATLDDLGQAKRIEIGKENTTVIDGFGDAAQIEARVAEIRQQIETATSDYDKEKLQERVAKLAGGVAVIKVGAATEVEMKEKKDRVEDALHATRAAVEEGVVAGGGVALLRARAALENLHTGNADQDAGVQIVLRAVESPLRQIVANAGGEPSVVVNKVLEGKGNYGYNAGSGEYGDMIGMGVLDPAKVTRSALQHAASIAGLMLTTDCMIAEIPEEKPAVPDMGGMGGMGGMM.

Residues 30–33 (TLGP), lysine 51, 87–91 (DGTTT), glycine 415, and aspartate 495 contribute to the ATP site.

It belongs to the chaperonin (HSP60) family. In terms of assembly, forms a cylinder of 14 subunits composed of two heptameric rings stacked back-to-back. Interacts with the co-chaperonin GroES.

It is found in the cell outer membrane. The enzyme catalyses ATP + H2O + a folded polypeptide = ADP + phosphate + an unfolded polypeptide.. In terms of biological role, together with its co-chaperonin GroES, plays an essential role in assisting protein folding. The GroEL-GroES system forms a nano-cage that allows encapsulation of the non-native substrate proteins and provides a physical environment optimized to promote and accelerate protein folding. The protein is Chaperonin GroEL of Neisseria gonorrhoeae.